The primary structure comprises 234 residues: Melanoregulin (234 aa).

The tract at residues 215–234 (MNQNISGGEDEDEDESEPDD) is disordered. Positions 222 to 234 (GEDEDEDESEPDD) are enriched in acidic residues.

The protein belongs to the melanoregulin family.

The protein localises to the apical cell membrane. Its subcellular location is the melanosome membrane. It is found in the lysosome membrane. It localises to the cytoplasmic vesicle membrane. Functionally, probably functions as a cargo-recognition protein that couples cytoplasmic vesicles to the transport machinery. Contributes to retrograde melanosome transport from the cell periphery to the center. Overexpression causes accumulation of late endosomes and/or lysosomes at the microtubule organising center (MTOC) at the center of the cell. Probably binds cholesterol and requires the presence of cholesterol in membranes to function in microtubule-mediated retrograde organelle transport. Binds phosphatidylinositol 3-phosphate, phosphatidylinositol 4-phosphate, phosphatidylinositol 5-phosphate and phosphatidylinositol 3,5-bisphosphate. The protein is Melanoregulin (mreg) of Danio rerio (Zebrafish).